The following is a 375-amino-acid chain: Probable butyrate kinase 2 (375 aa).

The protein belongs to the acetokinase family.

Its subcellular location is the cytoplasm. The enzyme catalyses butanoate + ATP = butanoyl phosphate + ADP. This Thermotoga maritima (strain ATCC 43589 / DSM 3109 / JCM 10099 / NBRC 100826 / MSB8) protein is Probable butyrate kinase 2.